The following is a 214-amino-acid chain: Adenylate kinase (214 aa).

Glycine 10 to threonine 15 is a binding site for ATP. The tract at residues serine 30–isoleucine 59 is NMP. AMP contacts are provided by residues threonine 31, arginine 36, glutamine 57 to isoleucine 59, glycine 85 to arginine 88, and glutamine 92. Residues glycine 122–aspartate 159 are LID. ATP-binding positions include arginine 123 and valine 132–tyrosine 133. AMP-binding residues include arginine 156 and arginine 167. Position 200 (glutamine 200) interacts with ATP.

The protein belongs to the adenylate kinase family. Monomer.

Its subcellular location is the cytoplasm. The enzyme catalyses AMP + ATP = 2 ADP. It participates in purine metabolism; AMP biosynthesis via salvage pathway; AMP from ADP: step 1/1. Catalyzes the reversible transfer of the terminal phosphate group between ATP and AMP. Plays an important role in cellular energy homeostasis and in adenine nucleotide metabolism. This is Adenylate kinase from Pseudoalteromonas translucida (strain TAC 125).